A 242-amino-acid polypeptide reads, in one-letter code: Protein HTATIP2 (242 aa).

N-acetylalanine is present on A2. Positions A2–G25 are required for interaction with elongation factor EEF1A1. Positions 27, 28, 29, 30, 52, 53, 92, 93, 143, 147, 170, and 178 each coordinate NADPH. The active-site Proton acceptor is the Y143. The active site involves K147.

As to quaternary structure, monomer. Forms homodimers during oxidative stress. Interacts (via N-terminus) with elongation factor EEF1A1 (via middle-region); the interaction is direct and competes with EEF1A1 binding to guanyl-nucleotide exchange factor EEF1B2, thereby inhibiting GDP for GTP exchange and reactivation of EEF1A1. Interacts with nuclear transport receptors XPO4, IPO5/RANBP5, IPO7, IPO9 and KPNB1 as well as GCN1L1/GCN1 and LRPPRC probably through their HEAT repeats. Binds NCOA5/CIA.

Functionally, represses translation by preventing reactivation of elongation factor eEF1A. May also inhibit nuclear import by competing with nuclear import substrates for binding to a subset of nuclear transport receptors. Has additionally been proposed to act as a redox sensor involved in cellular oxidative stress surveillance. May bind NADPH. In Rattus norvegicus (Rat), this protein is Protein HTATIP2.